We begin with the raw amino-acid sequence, 837 residues long: Zinc fingers and homeoboxes protein 2 (837 aa).

The disordered stretch occupies residues 1-41; sequence MASKRKSTTPCMVRTSQVVEQDVPEEVDRAKEKGIGTPQPD. An interaction with EFNB1 region spans residues 27 to 77; sequence VDRAKEKGIGTPQPDVAKDCWAAELENSSKENEVIEVKSMGESQSKKLQGG. Residue Thr37 is modified to Phosphothreonine. Lys64 is covalently cross-linked (Glycyl lysine isopeptide (Lys-Gly) (interchain with G-Cter in SUMO2)). 2 consecutive C2H2-type zinc fingers follow at residues 78–101 and 110–133; these read YECK…DMQH and YVCA…SKFH. The segment covering 167-180 has biased composition (low complexity); the sequence is TSGPGTGDSDSGIS. The tract at residues 167-203 is disordered; sequence TSGPGTGDSDSGISVSKTPIMKPGKPKADAKKVPKKP. Positions 192–203 are enriched in basic and acidic residues; sequence PKADAKKVPKKP. Residues 195 to 358 are required for homodimerization; it reads DAKKVPKKPE…PAQLAPTKVT (164 aa). 4 DNA-binding regions (homeobox) span residues 263-324, 439-501, 530-591, and 628-690; these read NTTK…WSPE, TPAS…IVHI, PQKF…EQAV, and SPSP…TVKW. The required for repressor activity stretch occupies residues 263–446; that stretch reads NTTKYNSALD…PLTPASDRKK (184 aa). The interval 263–497 is required for interaction with NFYA; sequence NTTKYNSALD…SDHRYRCQRG (235 aa). Residues 317–446 are required for nuclear localization; that stretch reads HGISWSPEEV…PLTPASDRKK (130 aa). A disordered region spans residues 404–445; the sequence is GQKRPLVTPQAAPEPKRPHIAQVPEPPPKVANPPLTPASDRK. Residues 427–439 are compositionally biased toward pro residues; that stretch reads PEPPPKVANPPLT. Lys455 participates in a covalent cross-link: Glycyl lysine isopeptide (Lys-Gly) (interchain with G-Cter in SUMO2). Residues 754–837 are disordered; that stretch reads EPAKDCLPAK…DCVPAEAGQA (84 aa). Phosphoserine is present on residues Ser825 and Ser827.

It belongs to the ZHX family. As to quaternary structure, homodimer (via homeobox domain 1). Heterodimer with ZHX1 (via homeobox domain 1). Heterodimer with ZHX3 (via homeobox domain 1). Heterodimerization with ZHX1 is not necessary for repressor activity. Interacts (via homeobox domain) with NFYA (via N-terminus). Interacts with EFNB1 intracellular domain peptide; the interaction enhances ZHX2 transcriptional repression activity.

It localises to the nucleus. Acts as a transcriptional repressor. Represses the promoter activity of the CDC25C gene stimulated by NFYA. May play a role in retinal development where it regulates the composition of bipolar cell populations, by promoting differentiation of bipolar OFF-type cells. In the brain, may promote maintenance and suppress differentiation of neural progenitor cells in the developing cortex. The chain is Zinc fingers and homeoboxes protein 2 (ZHX2) from Pongo abelii (Sumatran orangutan).